The chain runs to 151 residues: Ribosomal RNA large subunit methyltransferase H (151 aa).

Residues L70, G99, and 118–123 contribute to the S-adenosyl-L-methionine site; that span reads LSKLTF.

Belongs to the RNA methyltransferase RlmH family. In terms of assembly, homodimer.

It is found in the cytoplasm. It carries out the reaction pseudouridine(1915) in 23S rRNA + S-adenosyl-L-methionine = N(3)-methylpseudouridine(1915) in 23S rRNA + S-adenosyl-L-homocysteine + H(+). Its function is as follows. Specifically methylates the pseudouridine at position 1915 (m3Psi1915) in 23S rRNA. The sequence is that of Ribosomal RNA large subunit methyltransferase H from Gloeobacter violaceus (strain ATCC 29082 / PCC 7421).